A 415-amino-acid polypeptide reads, in one-letter code: Phosphoglycerate kinase (415 aa).

Residues 24–26, arginine 43, 66–69, arginine 125, and arginine 165 each bind substrate; these read DLN and HLGR. ATP is bound by residues lysine 215, glycine 303, glutamate 334, and 363 to 366; that span reads GGDS.

It belongs to the phosphoglycerate kinase family. In terms of assembly, monomer.

The protein localises to the cytoplasm. It carries out the reaction (2R)-3-phosphoglycerate + ATP = (2R)-3-phospho-glyceroyl phosphate + ADP. The protein operates within carbohydrate degradation; glycolysis; pyruvate from D-glyceraldehyde 3-phosphate: step 2/5. The protein is Phosphoglycerate kinase of Mycobacterium avium (strain 104).